The primary structure comprises 529 residues: Bifunctional purine biosynthesis protein PurH (529 aa).

Residues 1-148 (MQQRRPVRRA…KNHKDVAIVV (148 aa)) enclose the MGS-like domain. Lys-287 bears the N6-acetyllysine mark.

Belongs to the PurH family.

The catalysed reaction is (6R)-10-formyltetrahydrofolate + 5-amino-1-(5-phospho-beta-D-ribosyl)imidazole-4-carboxamide = 5-formamido-1-(5-phospho-D-ribosyl)imidazole-4-carboxamide + (6S)-5,6,7,8-tetrahydrofolate. The enzyme catalyses IMP + H2O = 5-formamido-1-(5-phospho-D-ribosyl)imidazole-4-carboxamide. The protein operates within purine metabolism; IMP biosynthesis via de novo pathway; 5-formamido-1-(5-phospho-D-ribosyl)imidazole-4-carboxamide from 5-amino-1-(5-phospho-D-ribosyl)imidazole-4-carboxamide (10-formyl THF route): step 1/1. Its pathway is purine metabolism; IMP biosynthesis via de novo pathway; IMP from 5-formamido-1-(5-phospho-D-ribosyl)imidazole-4-carboxamide: step 1/1. This chain is Bifunctional purine biosynthesis protein PurH, found in Escherichia coli (strain SMS-3-5 / SECEC).